Reading from the N-terminus, the 200-residue chain is Cysteine dioxygenase type 1 (200 aa).

Positions 86, 88, and 140 each coordinate Fe cation. Residues 93–157 (CFLKLLQGNL…TEPAVSLHLY (65 aa)) constitute a cross-link (3'-(S-cysteinyl)-tyrosine (Cys-Tyr)).

The protein belongs to the cysteine dioxygenase family. In terms of assembly, monomer. The cofactor is Fe(2+). Ni(2+) serves as cofactor. Zn(2+) is required as a cofactor. In terms of processing, the thioether cross-link between Cys-93 and Tyr-157 plays a structural role through stabilizing the Fe(2+) ion, and prevents the production of highly damaging free hydroxyl radicals by holding the oxygen radical via hydroxyl hydrogen. In terms of tissue distribution, highest expression in liver. Also expressed in kidney, lung, brain and small intestine.

The catalysed reaction is L-cysteine + O2 = 3-sulfino-L-alanine + H(+). It participates in organosulfur biosynthesis; taurine biosynthesis; hypotaurine from L-cysteine: step 1/2. Catalyzes the oxidation of cysteine to cysteine sulfinic acid with addition of molecular dioxygen. This chain is Cysteine dioxygenase type 1 (Cdo1), found in Mus musculus (Mouse).